The chain runs to 197 residues: MEKFVTLTSTVVPLPIQNIDTDQIIPARFLKAISKEGFGNNLFRDWRYDKNNNAISSFVLNNPIYNESKILVTGKNFGSGSSREHAAWAIADYGFKVVISSFFADIFKNNAMNNFVLPLVVSETFLSQIFESVNKNPKTTLTIDLENQIINNNSTRQLEKFIINAYKKECFLNGFDDIDFLLDKKYKIEEYERNCEY.

It belongs to the LeuD family. LeuD type 1 subfamily. As to quaternary structure, heterodimer of LeuC and LeuD.

The enzyme catalyses (2R,3S)-3-isopropylmalate = (2S)-2-isopropylmalate. It participates in amino-acid biosynthesis; L-leucine biosynthesis; L-leucine from 3-methyl-2-oxobutanoate: step 2/4. In terms of biological role, catalyzes the isomerization between 2-isopropylmalate and 3-isopropylmalate, via the formation of 2-isopropylmaleate. The chain is 3-isopropylmalate dehydratase small subunit from Azobacteroides pseudotrichonymphae genomovar. CFP2.